The chain runs to 780 residues: Cyclin-F (780 aa).

A Nuclear localization signal 1 motif is present at residues 20–28 (KRRIKRRPR). Positions 29-76 (NLTILSLPEDVLFHILKWLSVGDILAVRAVHSHLKYLVDNHASVWASA) constitute an F-box domain. A Cyclin N-terminal domain is found at 288-405 (QASQAVNKQQ…EIISALEGKI (118 aa)). 3 consecutive short sequence motifs (d box) follow at residues 310 to 313 (RYIL), 343 to 346 (RRRL), and 349 to 352 (RYKL). Disordered regions lie at residues 544-594 (QESP…AELS), 651-733 (QESS…STKP), and 745-780 (CRPP…FLKL). Positions 568–574 (RRSKRKR) match the Nuclear localization signal 2 motif. Residues 582–761 (RGSFVTTPTA…ESGAHQQPVK (180 aa)) form a PEST region. A compositionally biased stretch (polar residues) spans 585-594 (FVTTPTAELS). Low complexity-rich tracts occupy residues 695–708 (SGYS…PISS) and 719–731 (STSV…HSST). The short motif at 762–765 (RQNL) is the D box 4 element.

This sequence belongs to the cyclin family. Cyclin AB subfamily. As to quaternary structure, component of the SCF(CCNF) complex consisting of CUL1, RBX1, SKP1 and CCNF. Interacts with SKP1. Interacts with CUL1. Interacts with CCNB1; interaction is required for nuclear localization of CCNB1. Interacts with CCP110; this interaction leads to CCP110 ubiquitination and degradation via the proteasome pathway. Interacts (via the Cyclin N-terminal domain) with MYBL2/BMYB. Interacts with FZR1/CDH1 (via N-terminus). Interacts with RRM2 (via Cy motif and when phosphorylated at 'Thr-33'); the interaction occurs exclusively in G2 and early M. Interacts with CDC6 (via Cy motif); the interaction takes place during G2 and M phase. Degraded when the spindle assembly checkpoint is activated during the G2-M transition. Degradation is not dependent on the proteasome or ubiquitin and depends on the C-terminal PEST sequence. Post-translationally, phosphorylated just before cells enter into mitosis. In terms of processing, ubiquitinated by the anaphase-promoting complex (APC/C); leading to its degradation by the proteasome.

Its subcellular location is the nucleus. The protein resides in the cytoplasm. It is found in the perinuclear region. The protein localises to the cytoskeleton. It localises to the microtubule organizing center. Its subcellular location is the centrosome. The protein resides in the centriole. Functionally, substrate recognition component of a SCF (SKP1-CUL1-F-box protein) E3 ubiquitin-protein ligase complex which mediates the ubiquitination and subsequent proteasomal degradation of target proteins. The SCF(CCNF) E3 ubiquitin-protein ligase complex is an integral component of the ubiquitin proteasome system (UPS) and links proteasome degradation to the cell cycle. Mediates the substrate recognition and the proteasomal degradation of various target proteins involved in the regulation of cell cycle progression and in the maintenance of genome stability. Mediates the ubiquitination and subsequent proteasomal degradation of CP110 during G2 phase, thereby acting as an inhibitor of centrosome reduplication. In G2, mediates the ubiquitination and proteasomal degradation of CDC6, thereby suppressing DNA re-replication and preventing genome instability. Involved in the ubiquitination and degradation of the substrate adapter CDH1 of the anaphase-promoting complex (APC/C), thereby acting as an antagonist of APC/C in regulating G1 progression and S phase entry. May play a role in the G2 cell cycle checkpoint control after DNA damage, possibly by promoting the ubiquitination of MYBL2/BMYB. In Rattus norvegicus (Rat), this protein is Cyclin-F (Ccnf).